A 533-amino-acid polypeptide reads, in one-letter code: MLVSDLVATSERVAALSRRVEKIGALAALLRRFSPAEVQIGVDWLTGRLRQGRLGLGPSVFAEARRASPSVAQPALTLGDADAVFTEIARASGPGAGGERRAALAGLFARATDLERDFFARLLAGELRQERLEPVMVDAVARAARVPPASLRRAVMLAGDAAEVVKAALLEGALGLQRFSLQLLRPVQPMLAQSADDVVTALSELRAMALEWKLDGVRVQAHKAGDEVRVFSRGLGPVTKAVPEIVEIVRALPVRSVVLDGEALAFRPDGAPHPFQVTMRRFGRAHDAAALRAELPLRALFFDVLHLDGEDLLDRPGSERTAALRQVLDRSLRVPRIELPTAAEAEAFFADALAHGHEGVIAKSLAAPYEAGRRRGTWLKVKRARTLDLVVLAAEWGTGRRRGLLSNLHIGARDPAAGGFVLLGKTFKGMNDEVLAWQTQRLLELEIGRDADTVYVRPEIVVEVAFDGLQSSPRYPGGVALRSARVKRYRPDKPAGEISTMDEVRAIHAGALAGEAAEKGQAEGGGEELEDDG.

Residue E211 participates in ATP binding. Catalysis depends on K213, which acts as the N6-AMP-lysine intermediate. Residues R218, R233, E262, F302, R374, and K380 each coordinate ATP. Residues 512–533 (LAGEAAEKGQAEGGGEELEDDG) form a disordered region.

This sequence belongs to the ATP-dependent DNA ligase family. Mg(2+) is required as a cofactor.

It catalyses the reaction ATP + (deoxyribonucleotide)n-3'-hydroxyl + 5'-phospho-(deoxyribonucleotide)m = (deoxyribonucleotide)n+m + AMP + diphosphate.. Functionally, DNA ligase that seals nicks in double-stranded DNA during DNA replication, DNA recombination and DNA repair. The protein is Probable DNA ligase of Sorangium cellulosum (strain So ce56) (Polyangium cellulosum (strain So ce56)).